The chain runs to 180 residues: Large ribosomal subunit protein uL6 (180 aa).

This sequence belongs to the universal ribosomal protein uL6 family. Part of the 50S ribosomal subunit.

This protein binds to the 23S rRNA, and is important in its secondary structure. It is located near the subunit interface in the base of the L7/L12 stalk, and near the tRNA binding site of the peptidyltransferase center. This is Large ribosomal subunit protein uL6 from Borrelia garinii subsp. bavariensis (strain ATCC BAA-2496 / DSM 23469 / PBi) (Borreliella bavariensis).